We begin with the raw amino-acid sequence, 441 residues long: Histone-lysine N-methyltransferase set9 (441 aa).

The SET domain occupies 108–221; that stretch reads CKFEICSTNQ…PGEEITTFYS (114 aa).

It belongs to the class V-like SAM-binding methyltransferase superfamily. Histone-lysine methyltransferase family. Suvar4-20 subfamily.

The protein resides in the nucleus. It is found in the chromosome. It carries out the reaction L-lysyl(20)-[histone H4] + 3 S-adenosyl-L-methionine = N(6),N(6),N(6)-trimethyl-L-lysyl(20)-[histone H4] + 3 S-adenosyl-L-homocysteine + 3 H(+). Histone methyltransferase that specifically trimethylates 'Lys-20' of histone H4 to form H4K20me3. H4 'Lys-20' methylation is apparently not involved in the regulation of gene expression or heterochromatin function but participates in DNA damage response by giving a 'histone mark' required for the recruitment of the checkpoint protein Crb2 to sites of DNA damage. This is Histone-lysine N-methyltransferase set9 (set9) from Schizosaccharomyces pombe (strain 972 / ATCC 24843) (Fission yeast).